A 173-amino-acid chain; its full sequence is Large ribosomal subunit protein uL10 (173 aa).

Belongs to the universal ribosomal protein uL10 family. As to quaternary structure, part of the ribosomal stalk of the 50S ribosomal subunit. The N-terminus interacts with L11 and the large rRNA to form the base of the stalk. The C-terminus forms an elongated spine to which L12 dimers bind in a sequential fashion forming a multimeric L10(L12)X complex.

Functionally, forms part of the ribosomal stalk, playing a central role in the interaction of the ribosome with GTP-bound translation factors. The polypeptide is Large ribosomal subunit protein uL10 (Cupriavidus metallidurans (strain ATCC 43123 / DSM 2839 / NBRC 102507 / CH34) (Ralstonia metallidurans)).